Reading from the N-terminus, the 429-residue chain is UDP-N-acetylglucosamine 1-carboxyvinyltransferase (429 aa).

22 to 23 (KN) contributes to the phosphoenolpyruvate binding site. Residue R102 coordinates UDP-N-acetyl-alpha-D-glucosamine. C126 serves as the catalytic Proton donor. C126 is modified (2-(S-cysteinyl)pyruvic acid O-phosphothioketal). Residues 131–135 (RPVDL), D316, and I338 contribute to the UDP-N-acetyl-alpha-D-glucosamine site.

It belongs to the EPSP synthase family. MurA subfamily.

Its subcellular location is the cytoplasm. The enzyme catalyses phosphoenolpyruvate + UDP-N-acetyl-alpha-D-glucosamine = UDP-N-acetyl-3-O-(1-carboxyvinyl)-alpha-D-glucosamine + phosphate. Its pathway is cell wall biogenesis; peptidoglycan biosynthesis. Functionally, cell wall formation. Adds enolpyruvyl to UDP-N-acetylglucosamine. The protein is UDP-N-acetylglucosamine 1-carboxyvinyltransferase of Nitrobacter winogradskyi (strain ATCC 25391 / DSM 10237 / CIP 104748 / NCIMB 11846 / Nb-255).